The following is a 289-amino-acid chain: Cell division protein ZipA (289 aa).

Position 1 (Met1) is a topological domain, periplasmic. The helical transmembrane segment at 2-22 (EIGLREWLIVIGIIVIAGILF) threads the bilayer. Residues 23–289 (DGWRRMRGSK…ERRALTQRRG (267 aa)) lie on the Cytoplasmic side of the membrane. Positions 48–141 (DEEETTSAEV…KPAQRITEDK (94 aa)) are disordered. 3 stretches are compositionally biased toward basic and acidic residues: residues 64-77 (LDTH…EHDL), 85-106 (REGK…KDEP), and 123-141 (GRDD…TEDK).

It belongs to the ZipA family. In terms of assembly, interacts with FtsZ via their C-terminal domains.

It localises to the cell inner membrane. Its function is as follows. Essential cell division protein that stabilizes the FtsZ protofilaments by cross-linking them and that serves as a cytoplasmic membrane anchor for the Z ring. Also required for the recruitment to the septal ring of downstream cell division proteins. In Pseudomonas savastanoi pv. phaseolicola (strain 1448A / Race 6) (Pseudomonas syringae pv. phaseolicola (strain 1448A / Race 6)), this protein is Cell division protein ZipA.